The sequence spans 133 residues: MSLQVRILTPEQVFLNVSADEIILPTNTGQMGVLTNHTPLITAIDIGPMLVRSESTWQSMALLGGLALVKDNQVIILVNEAELGSDINAEEAETTFLAAKEALANSKTRKDQIENNLAFKRARVRYQVATLVK.

It belongs to the ATPase epsilon chain family. F-type ATPases have 2 components, CF(1) - the catalytic core - and CF(0) - the membrane proton channel. CF(1) has five subunits: alpha(3), beta(3), gamma(1), delta(1), epsilon(1). CF(0) has three main subunits: a, b and c.

It localises to the plastid. The protein localises to the chloroplast thylakoid membrane. Functionally, produces ATP from ADP in the presence of a proton gradient across the membrane. This Nephroselmis olivacea (Green alga) protein is ATP synthase epsilon chain, chloroplastic.